A 625-amino-acid polypeptide reads, in one-letter code: Probable potassium transport system protein Kup (625 aa).

12 helical membrane passes run 13 to 33 (TALAALGVVFGDIGTSPLYAL), 53 to 73 (ILSIIFWCLMLIISIKYVAIV), 103 to 123 (IYMIAIGFIGASLFFGDGIIT), 141 to 161 (VFDPFIMPIAIAIIVTLFLVQ), 172 to 192 (FGPITLVWFLSLGILGIHSVI), 206 to 226 (AIQFIYHHPIMTFFVMGAVVL), 250 to 270 (WFFVVLPCLVLNYAGQGALLL), 282 to 302 (LLVPQWALYPMIIMATMATVI), 340 to 360 (IYVPFLNWLLLIAIIILILIF), 369 to 389 (AYGLAVTLTMLCDTILVAVFI), 400 to 420 (VLILIIPFFILESVLVGATSL), and 422 to 442 (ILSGGWVPLLIGAIAVTILMT).

It belongs to the HAK/KUP transporter (TC 2.A.72) family.

The protein resides in the cell inner membrane. The catalysed reaction is K(+)(in) + H(+)(in) = K(+)(out) + H(+)(out). Transport of potassium into the cell. Likely operates as a K(+):H(+) symporter. The chain is Probable potassium transport system protein Kup from Acinetobacter baumannii (strain SDF).